The following is a 46-amino-acid chain: MIDALVLVAKLPEAYAIFDPLVDVLPVIPVLFLALAFVWQAAVGFR.

A propeptide spanning residues Met-1 to Ala-9 is cleaved from the precursor. Topologically, residues Lys-10–Asp-19 are lumenal. The chain crosses the membrane as a helical span at residues Pro-20 to Trp-39. Residues Gln-40 to Arg-46 are Cytoplasmic-facing.

This sequence belongs to the PsbK family. As to quaternary structure, PSII is composed of 1 copy each of membrane proteins PsbA, PsbB, PsbC, PsbD, PsbE, PsbF, PsbH, PsbI, PsbJ, PsbK, PsbL, PsbM, PsbT, PsbX, PsbY, PsbZ, Psb30/Ycf12, peripheral proteins PsbO, CyanoQ(PsbQ), PsbU, PsbV and a large number of cofactors. It forms dimeric complexes. Part of a photosystem II (PSII) assembly intermediate complex PSII-I; crystallized from a strain deleted of psbJ, it forms monomeric PSII before addition of the oxygen evolving complex. PSII-I includes 3 assembly factors not found in mature PSII (Psb27, Psb28 and Psb34). PSII binds multiple chlorophylls, carotenoids and specific lipids. serves as cofactor.

Its subcellular location is the cellular thylakoid membrane. One of the components of the core complex of photosystem II (PSII). PSII is a light-driven water:plastoquinone oxidoreductase that uses light energy to abstract electrons from H(2)O, generating O(2) and a proton gradient subsequently used for ATP formation. It consists of a core antenna complex that captures photons, and an electron transfer chain that converts photonic excitation into a charge separation. Required for association of PsbZ and Psb30/Ycf12 with PSII. This chain is Photosystem II reaction center protein K, found in Thermosynechococcus vestitus (strain NIES-2133 / IAM M-273 / BP-1).